Reading from the N-terminus, the 564-residue chain is MFS-type transporter kojT (564 aa).

Residue Asn113 is glycosylated (N-linked (GlcNAc...) asparagine). Helical transmembrane passes span 120–140 (WATL…SSID), 159–179 (SLAT…AAPF), 187–207 (PVYI…GLAP), 217–237 (FLAG…MADI), 249–269 (VCCT…AFIG), 278–298 (WTEW…FLFV), 353–373 (IMVA…FGFL), 389–409 (GSVG…FAMV), 437–457 (LWFA…MGWT), 462–482 (ISYW…QGIF), 500–520 (ALVS…IVSI), and 530–550 (WSLT…YIFY).

The protein belongs to the major facilitator superfamily.

The protein localises to the cell membrane. In terms of biological role, MFS-type transporter; part of the gene cluster that mediates the biosynthesis of 5-hydroxy-2-hydroxymethyl-1,4-pyrone, also know as kojic acid, a by-product in the fermentation process of malting rice that acts as a chelation agent. Involved in the seretion of kojic acid. This Aspergillus flavus (strain ATCC 200026 / FGSC A1120 / IAM 13836 / NRRL 3357 / JCM 12722 / SRRC 167) protein is MFS-type transporter kojT.